Consider the following 379-residue polypeptide: Cytokine receptor common subunit gamma (379 aa).

Positions 1–22 (MLKPPLPLRSLLFLQLPLLGVG) are cleaved as a signal peptide. Residues 23–269 (LNPKFLTPSG…ENIENPENPS (247 aa)) are Extracellular-facing. C68 and C78 are joined by a disulfide. N77, N81, and N90 each carry an N-linked (GlcNAc...) asparagine glycan. A disulfide bridge connects residues C109 and C122. The Fibronectin type-III domain occupies 163 to 260 (APENLTLRNL…IHWGSNTSKE (98 aa)). N166 and N171 each carry an N-linked (GlcNAc...) asparagine glycan. A WSXWS motif motif is present at residues 244–248 (WSDWS). A helical transmembrane segment spans residues 270–290 (LFALEAVLIPLGSMGLIVSLI). At 291–379 (CVYCWLERTM…PPCYTLKPEP (89 aa)) the chain is on the cytoplasmic side. The short motif at 299-307 (TMPRIPTLK) is the Box 1 motif element. At T305 the chain carries Phosphothreonine. A disordered region spans residues 349 to 370 (PPKGGEGPGGSPCSQHSPYWAP).

Belongs to the type I cytokine receptor family. Type 5 subfamily. As to quaternary structure, the gamma subunit is common to the IL2, IL4, IL7, IL15, IL21 and probably also the IL13 receptors. Interacts with SHB upon interleukin stimulation.

The protein resides in the cell membrane. Its subcellular location is the cell surface. Functionally, common subunit for the receptors for a variety of interleukins. Probably in association with IL15RA, involved in the stimulation of neutrophil phagocytosis by IL15. The sequence is that of Cytokine receptor common subunit gamma (IL2RG) from Bos taurus (Bovine).